Consider the following 634-residue polypeptide: DNA-directed RNA polymerase subunit gamma (634 aa).

Zn(2+) is bound by residues C74, C76, C89, and C92. Positions 471, 473, and 475 each coordinate Mg(2+).

It belongs to the RNA polymerase beta' chain family. RpoC1 subfamily. As to quaternary structure, in cyanobacteria the RNAP catalytic core is composed of 2 alpha, 1 beta, 1 beta', 1 gamma and 1 omega subunit. When a sigma factor is associated with the core the holoenzyme is formed, which can initiate transcription. It depends on Mg(2+) as a cofactor. The cofactor is Zn(2+).

It catalyses the reaction RNA(n) + a ribonucleoside 5'-triphosphate = RNA(n+1) + diphosphate. In terms of biological role, DNA-dependent RNA polymerase catalyzes the transcription of DNA into RNA using the four ribonucleoside triphosphates as substrates. The protein is DNA-directed RNA polymerase subunit gamma of Synechococcus sp. (strain CC9311).